A 233-amino-acid chain; its full sequence is Large ribosomal subunit protein uL1 (233 aa).

Belongs to the universal ribosomal protein uL1 family. Part of the 50S ribosomal subunit.

Functionally, binds directly to 23S rRNA. The L1 stalk is quite mobile in the ribosome, and is involved in E site tRNA release. Its function is as follows. Protein L1 is also a translational repressor protein, it controls the translation of the L11 operon by binding to its mRNA. This Vibrio campbellii (strain ATCC BAA-1116) protein is Large ribosomal subunit protein uL1.